Here is a 220-residue protein sequence, read N- to C-terminus: Uracil-DNA glycosylase (220 aa).

Residue Asp-65 is the Proton acceptor of the active site.

Belongs to the uracil-DNA glycosylase (UDG) superfamily. UNG family.

Its subcellular location is the cytoplasm. The enzyme catalyses Hydrolyzes single-stranded DNA or mismatched double-stranded DNA and polynucleotides, releasing free uracil.. Excises uracil residues from the DNA which can arise as a result of misincorporation of dUMP residues by DNA polymerase or due to deamination of cytosine. The protein is Uracil-DNA glycosylase of Azobacteroides pseudotrichonymphae genomovar. CFP2.